A 445-amino-acid chain; its full sequence is uncharacterized protein (445 aa).

Helical transmembrane passes span 16–36 (IVSL…AFLI), 52–72 (LLAS…GYLL), 98–118 (VHSL…AGGC), 168–188 (GLMF…LGIV), 219–239 (ASAL…VWLI), 243–263 (GWSV…GALG), 283–303 (LIAA…NEGS), and 366–386 (AAYP…VPLV). Residues 417-445 (AWPNGPRRPGPPGQPRRVRQGGTAITPPT) are disordered.

Belongs to the major facilitator superfamily.

The protein localises to the cell membrane. This is an uncharacterized protein from Mycobacterium tuberculosis (strain CDC 1551 / Oshkosh).